The chain runs to 397 residues: Phosphoglycerate kinase (397 aa).

Substrate is bound by residues 21-23 (DFN), arginine 37, 60-63 (HLGR), arginine 119, and arginine 152. ATP contacts are provided by residues lysine 203, glycine 294, glutamate 325, and 354–357 (GGDS).

The protein belongs to the phosphoglycerate kinase family. As to quaternary structure, monomer.

The protein localises to the cytoplasm. The enzyme catalyses (2R)-3-phosphoglycerate + ATP = (2R)-3-phospho-glyceroyl phosphate + ADP. The protein operates within carbohydrate degradation; glycolysis; pyruvate from D-glyceraldehyde 3-phosphate: step 2/5. This Chlorobium chlorochromatii (strain CaD3) protein is Phosphoglycerate kinase.